Here is a 150-residue protein sequence, read N- to C-terminus: 3-dehydroquinate dehydratase (150 aa).

Tyr26 serves as the catalytic Proton acceptor. Residues Asn77, His83, and Asp90 each coordinate substrate. Residue His103 is the Proton donor of the active site. Substrate-binding positions include Leu104–Ser105 and Arg114.

The protein belongs to the type-II 3-dehydroquinase family. In terms of assembly, homododecamer.

It catalyses the reaction 3-dehydroquinate = 3-dehydroshikimate + H2O. The protein operates within metabolic intermediate biosynthesis; chorismate biosynthesis; chorismate from D-erythrose 4-phosphate and phosphoenolpyruvate: step 3/7. Its function is as follows. Catalyzes a trans-dehydration via an enolate intermediate. This chain is 3-dehydroquinate dehydratase, found in Photobacterium profundum (strain SS9).